Consider the following 222-residue polypeptide: Homing endonuclease I-ApeI (222 aa).

Probably functions as a monomer. Mg(2+) is required as a cofactor. Mn(2+) serves as cofactor.

Functionally, endonuclease involved in 16S rRNA intron I-alpha homing. Recognizes the minimal target 5'-GCAAGGCTGAAACTTAAAGG-3'; generates 4 base 3' protruding ends 5'-AAAC-3' and 5'-GTTT-3'. The polypeptide is Homing endonuclease I-ApeI (apeI) (Aeropyrum pernix (strain ATCC 700893 / DSM 11879 / JCM 9820 / NBRC 100138 / K1)).